We begin with the raw amino-acid sequence, 991 residues long: Glutamate receptor 1 (991 aa).

A signal peptide spans 1–27 (MHSRLKFLAYLHFICASSIFWPEFSSA). The Extracellular segment spans residues 28 to 611 (QQQQQTVSLT…VFSFLNPLSQ (584 aa)). Asn67, Asn195, Asn208, and Asn281 each carry an N-linked (GlcNAc...) asparagine glycan. Disordered regions lie at residues 300-321 (DSRKRLEPSGQSQSQNAGGPNS) and 354-379 (FRSNHLQRRSHGGSSSSSATGTNESS). Residues 308-318 (SGQSQSQNAGG) show a composition bias toward polar residues. Residues 365–379 (GGSSSSSATGTNESS) show a composition bias toward low complexity. N-linked (GlcNAc...) asparagine glycans are attached at residues Asn376, Asn385, Asn426, Asn437, and Asn477. A helical membrane pass occupies residues 612-632 (EIWISVILSYVGVSFVLYFVT). The Cytoplasmic segment spans residues 633 to 710 (RFPPYEWRIV…PSIAGRIAAA (78 aa)). A helical membrane pass occupies residues 711–731 (VWWFFTIILISSYTANLAAFL). Over 732 to 895 (TVERMVAPIK…STPNELSLSN (164 aa)) the chain is Extracellular. Residues 896 to 916 (VAGIYYILIGGLLLAVIVAIM) traverse the membrane as a helical segment. Over 917–991 (EFFCRNKTPQ…ASNVRYQYSM (75 aa)) the chain is Cytoplasmic.

The protein belongs to the glutamate-gated ion channel (TC 1.A.10.1) family. In terms of assembly, homooligomer. In terms of tissue distribution, central nervous system.

Its subcellular location is the cell membrane. It is found in the postsynaptic cell membrane. Its function is as follows. Receptor for glutamate. L-glutamate acts as an excitatory neurotransmitter at many synapses in the central nervous system. The postsynaptic actions of Glu are mediated by a variety of receptors that are named according to their selective agonists. Forms ligand-gated ion channels which are activated by kainate. The chain is Glutamate receptor 1 (GluRIA) from Drosophila melanogaster (Fruit fly).